The primary structure comprises 103 residues: Large ribosomal subunit protein uL24 (103 aa).

This sequence belongs to the universal ribosomal protein uL24 family. Part of the 50S ribosomal subunit.

In terms of biological role, one of two assembly initiator proteins, it binds directly to the 5'-end of the 23S rRNA, where it nucleates assembly of the 50S subunit. Its function is as follows. One of the proteins that surrounds the polypeptide exit tunnel on the outside of the subunit. The chain is Large ribosomal subunit protein uL24 from Pediococcus pentosaceus (strain ATCC 25745 / CCUG 21536 / LMG 10740 / 183-1w).